The sequence spans 156 residues: uncharacterized protein (156 aa).

In terms of domain architecture, N-acetyltransferase spans 11–156 (EEFRSYLTYT…ETDVVMSKKL (146 aa)).

Belongs to the acetyltransferase family. As to quaternary structure, homodimer.

This is an uncharacterized protein from Bacillus subtilis (strain 168).